The chain runs to 460 residues: Ammonium transporter Rh type C (460 aa).

The Cytoplasmic segment spans residues 1–9; it reads MIWNTNLRW. A helical transmembrane segment spans residues 10–30; that stretch reads RLPVACLLLEVALIALFGVFV. Topologically, residues 31–61 are extracellular; that stretch reads RYDMDADPHWVQEKVIKNLSTDLENEFYYRY. Asn48 carries an N-linked (GlcNAc...) asparagine glycan. Residues 62-82 form a helical membrane-spanning segment; the sequence is PSFQDVHVMIFVGFGFLMTFL. At 83–89 the chain is on the cytoplasmic side; sequence QRYGYSS. A helical transmembrane segment spans residues 90–110; that stretch reads VGFNFLLAAFGIQWALLMQGW. Topologically, residues 111 to 125 are extracellular; the sequence is LQSFDGRYILVDLEN. The helical transmembrane segment at 126–145 threads the bilayer; the sequence is LINADFCVGSVCVAFGAVLG. At 146–151 the chain is on the cytoplasmic side; it reads KVSPVQ. Residues 152-174 traverse the membrane as a helical segment; that stretch reads LLIMTLFQVTLFSINEYILLNLL. Over 175–179 the chain is Extracellular; sequence EVKDS. A helical transmembrane segment spans residues 180–200; sequence GGSMTIHAFGAYFGLTVAWIL. At 201–219 the chain is on the cytoplasmic side; that stretch reads YRPNLHLSKERQSSTYHSD. The chain crosses the membrane as a helical span at residues 220–240; it reads LFAMIGTLFLWMYWPSFNSAI. At 241–251 the chain is on the extracellular side; it reads SNHGDAQHRAA. The chain crosses the membrane as a helical span at residues 252 to 272; the sequence is INTYCSLAACVLTSVALSSAL. Residues 273 to 285 are Cytoplasmic-facing; that stretch reads HRKGKLDMVHIQN. The helical transmembrane segment at 286-303 threads the bilayer; it reads ATLAGGVGLGTVAELMVL. At 304-306 the chain is on the extracellular side; sequence PFG. A helical transmembrane segment spans residues 307 to 329; it reads SLIIGFVCGIVSTLGFVYLTPFL. At 330-346 the chain is on the cytoplasmic side; that stretch reads ESRLHIQDTCGVHNLHG. The chain crosses the membrane as a helical span at residues 347 to 367; the sequence is IPGIIGGIAGAVTASIANIDL. Topologically, residues 368–396 are extracellular; the sequence is YGEEGLAYAFGIERSKLNWSPNMQGRFQA. The chain crosses the membrane as a helical span at residues 397–417; that stretch reads AGLFVSLAMALVGGVIVGVIL. Over 418 to 460 the chain is Cytoplasmic; it reads RLPFWGQAPDENCFEDAVYWEIPKEPKSTALRSEDSSIKPPEP.

The protein belongs to the ammonium transporter (TC 2.A.49) family. Rh subfamily. Homotrimer. Post-translationally, N-glycosylated.

It is found in the apical cell membrane. It catalyses the reaction NH4(+)(in) = NH4(+)(out). The enzyme catalyses methylamine(out) = methylamine(in). It carries out the reaction CO2(out) = CO2(in). Its function is as follows. Ammonium transporter involved in the maintenance of acid-base homeostasis. Transports ammonium and its related derivative methylammonium across the plasma membrane of epithelial cells likely contributing to renal transepithelial ammonia transport and ammonia metabolism. Postulated to primarily mediate an electroneutral bidirectional transport of NH3 ammonia species according to a mechanism that implies interaction of an NH4(+) ion with acidic residues of the pore entry followed by dissociation of NH4(+) into NH3 and H(+). As a result NH3 transits through the central pore and is protonated on the extracellular side reforming NH4(+). May act as a CO2 channel providing for renal acid secretion. The sequence is that of Ammonium transporter Rh type C (RHCG) from Bos taurus (Bovine).